Consider the following 594-residue polypeptide: Microtubule-associated protein VP8 (594 aa).

It is found in the virion. The protein resides in the host cytoplasm. The protein localises to the host cytoskeleton. Its function is as follows. Minor inner capsid component. Displays NTPase and RNA 5'-triphosphatase (RTPase) activities. May function as a cofactor of polymerase VP1. Associates with microtubules and plays a role in the formation, structural organization and morphology of viral inclusions, where the assembly of cores and the replication of viral RNA occur. The protein is Microtubule-associated protein VP8 (S8) of Saccharum officinarum (Sugarcane).